The sequence spans 149 residues: uncharacterized protein (149 aa).

A run of 2 helical transmembrane segments spans residues 91–111 (IFILLCLLICLGLALMGLFHY) and 122–142 (ISILFWSGSAFLIIVLIICLL).

The protein resides in the membrane. This is an uncharacterized protein from Dictyostelium discoideum (Social amoeba).